The chain runs to 1080 residues: DNA-directed RNA polymerase subunit beta C-terminal section (1080 aa).

It belongs to the RNA polymerase beta chain family. In plastids the minimal PEP RNA polymerase catalytic core is composed of four subunits: alpha, beta, beta', and beta''. When a (nuclear-encoded) sigma factor is associated with the core the holoenzyme is formed, which can initiate transcription.

The protein localises to the plastid. Its subcellular location is the chloroplast. The catalysed reaction is RNA(n) + a ribonucleoside 5'-triphosphate = RNA(n+1) + diphosphate. Its function is as follows. DNA-dependent RNA polymerase catalyzes the transcription of DNA into RNA using the four ribonucleoside triphosphates as substrates. This chain is DNA-directed RNA polymerase subunit beta C-terminal section (rpoB2), found in Stigeoclonium helveticum (Green alga).